The chain runs to 318 residues: MDYTNNQLHIIYGDATLGVNGKDFQYIFSYERGGLESLKVHGKEWLYRVPTPTFWRATTDNDRGSGFNLKAAQWLGADMFTKCTDIHLKVDRHDFAELPIAPFNNKFSNHEYAKSAEISFTYQTLTTPATNAKIIYNIDDVGHIKVTMRYYGKKGLPPLPVIGIRLIMPTAATGFDYEGLSGETYPDRMAGAKEGKFHIDGLPVTEYLVPQENGMHMQTKKLTINRETTQNNVDRTNEKFSLSIQQAEKPFNFSCLPYTAEELENATHIEELPLVRRTVLVIAGAVRGVGGIDSWGTDVESAYHINPELDHEFSFILN.

It belongs to the bacterial beta-galactosidase small subunit family. As to quaternary structure, heterodimer of a large (LacL) and a small subunit (LacM).

It catalyses the reaction Hydrolysis of terminal non-reducing beta-D-galactose residues in beta-D-galactosides.. Functionally, component of a beta-galactosidase. This chain is Beta-galactosidase small subunit, found in Lactobacillus helveticus (Lactobacillus suntoryeus).